The following is a 264-amino-acid chain: Thymidylate synthase (264 aa).

Arg-21 lines the dUMP pocket. His-51 is a binding site for (6R)-5,10-methylene-5,6,7,8-tetrahydrofolate. 126 to 127 (RR) provides a ligand contact to dUMP. Residue Cys-146 is the Nucleophile of the active site. DUMP-binding positions include 166 to 169 (RSAD), Asn-177, and 207 to 209 (HLY). A (6R)-5,10-methylene-5,6,7,8-tetrahydrofolate-binding site is contributed by Asp-169. Ala-263 provides a ligand contact to (6R)-5,10-methylene-5,6,7,8-tetrahydrofolate.

The protein belongs to the thymidylate synthase family. Bacterial-type ThyA subfamily. In terms of assembly, homodimer.

It is found in the cytoplasm. It carries out the reaction dUMP + (6R)-5,10-methylene-5,6,7,8-tetrahydrofolate = 7,8-dihydrofolate + dTMP. It functions in the pathway pyrimidine metabolism; dTTP biosynthesis. Its function is as follows. Catalyzes the reductive methylation of 2'-deoxyuridine-5'-monophosphate (dUMP) to 2'-deoxythymidine-5'-monophosphate (dTMP) while utilizing 5,10-methylenetetrahydrofolate (mTHF) as the methyl donor and reductant in the reaction, yielding dihydrofolate (DHF) as a by-product. This enzymatic reaction provides an intracellular de novo source of dTMP, an essential precursor for DNA biosynthesis. The chain is Thymidylate synthase from Ralstonia nicotianae (strain ATCC BAA-1114 / GMI1000) (Ralstonia solanacearum).